Consider the following 487-residue polypeptide: UDP-N-acetylmuramate--L-alanine ligase (487 aa).

124–130 (GTHGKTT) contributes to the ATP binding site.

Belongs to the MurCDEF family.

It localises to the cytoplasm. The catalysed reaction is UDP-N-acetyl-alpha-D-muramate + L-alanine + ATP = UDP-N-acetyl-alpha-D-muramoyl-L-alanine + ADP + phosphate + H(+). It functions in the pathway cell wall biogenesis; peptidoglycan biosynthesis. Cell wall formation. The protein is UDP-N-acetylmuramate--L-alanine ligase of Acaryochloris marina (strain MBIC 11017).